A 179-amino-acid chain; its full sequence is Calcineurin subunit B type 2 (179 aa).

Residue Gly2 is the site of N-myristoyl glycine attachment. EF-hand domains are found at residues 18–53, 57–85, 87–122, and 128–163; these read EEIR…QQNP, RVID…FSVK, DEEQ…MVGN, and QLQQ…MEIH. Positions 31, 33, 35, 37, 42, 63, 65, 67, 69, 74, 100, 102, 104, and 111 each coordinate Ca(2+). Residues 131-136 are calcineurin A binding; that stretch reads QLVDKS. Ca(2+)-binding residues include Asp141, Asp143, Asp145, Arg147, and Glu152.

It belongs to the calcineurin regulatory subunit family. Forms a complex composed of a calmodulin-dependent catalytic subunit (also known as calcineurin A) and a regulatory Ca(2+)-binding subunit (also known as calcineurin B). There are three catalytic subunits, each encoded by a separate gene (PPP3CA, PPP3CB, and PPP3CC) and two regulatory subunits which are also encoded by separate genes (PPP3R1 and PPP3R2). Interacts with SPATA33 (via PQIIIT motif). In terms of tissue distribution, expressed in osteoblasts and bone marrow (at protein level). Expressed in the testis. Expressed in the sperm midpiece in a SPATA33-dependent manner (at protein level).

Its subcellular location is the mitochondrion. Its function is as follows. Regulatory subunit of calcineurin, a calcium-dependent, calmodulin stimulated protein phosphatase. Confers calcium sensitivity. This Mus musculus (Mouse) protein is Calcineurin subunit B type 2 (Ppp3r2).